Here is a 340-residue protein sequence, read N- to C-terminus: L-threonine 3-dehydrogenase (340 aa).

Cys-38 provides a ligand contact to Zn(2+). Active-site charge relay system residues include Thr-40 and His-43. Residues His-63, Glu-64, Cys-93, Cys-96, Cys-99, and Cys-107 each coordinate Zn(2+). Residues Ile-175, Asp-195, Arg-200, 261-263, and 285-286 contribute to the NAD(+) site; these read LGI and IY.

The protein belongs to the zinc-containing alcohol dehydrogenase family. As to quaternary structure, homotetramer. Zn(2+) serves as cofactor.

The protein resides in the cytoplasm. The enzyme catalyses L-threonine + NAD(+) = (2S)-2-amino-3-oxobutanoate + NADH + H(+). Its pathway is amino-acid degradation; L-threonine degradation via oxydo-reductase pathway; glycine from L-threonine: step 1/2. Catalyzes the NAD(+)-dependent oxidation of L-threonine to 2-amino-3-ketobutyrate. The chain is L-threonine 3-dehydrogenase from Xanthomonas euvesicatoria pv. vesicatoria (strain 85-10) (Xanthomonas campestris pv. vesicatoria).